The sequence spans 103 residues: L-rhamnose mutarotase (103 aa).

Tyr18 contributes to the substrate binding site. His22 acts as the Proton donor in catalysis. Substrate contacts are provided by residues Tyr41 and 76-77; that span reads WW.

It belongs to the rhamnose mutarotase family. Homodimer.

It localises to the cytoplasm. It catalyses the reaction alpha-L-rhamnose = beta-L-rhamnose. It functions in the pathway carbohydrate metabolism; L-rhamnose metabolism. Its function is as follows. Involved in the anomeric conversion of L-rhamnose. The sequence is that of L-rhamnose mutarotase from Enterococcus faecalis (strain ATCC 700802 / V583).